A 604-amino-acid polypeptide reads, in one-letter code: Protein CBFA2T2 (604 aa).

The interval 25–105 (KRVPAMPGSP…SSTSSALTNQ (81 aa)) is disordered. The residue at position 33 (Ser33) is a Phosphoserine. Lys38 is covalently cross-linked (Glycyl lysine isopeptide (Lys-Gly) (interchain with G-Cter in SUMO2)). Over residues 46–59 (PTMPPLPPINPGGP) the composition is skewed to pro residues. Composition is skewed to polar residues over residues 64–79 (FTPTALSNGINHSPPT) and 88–105 (QRFSNGPASSTSSALTNQ). Residues 107–215 (LPATCGARQL…QHEHLLLNTS (109 aa)) are interaction with PRDM14. Positions 113–208 (ARQLSKLKRF…TPSQYLAQHE (96 aa)) constitute a TAFH domain. The disordered stretch occupies residues 229 to 265 (VHGNGKRPSPERREENSFDRDTIAPEPPAKRVCTISP). The segment covering 236–251 (PSPERREENSFDRDTI) has biased composition (basic and acidic residues). Ser264 bears the Phosphoserine mark. A nervy homology region 2 (NHR2) region spans residues 331 to 377 (QDELVDHRLTEREWADEWKHLDHALNCIMEMVEKTRRSMAVLRRCQE). Residues 397–427 (RKTGTELVSRQHSPGSADSLSNDSQREFNSR) are disordered. The segment covering 402 to 419 (ELVSRQHSPGSADSLSND) has biased composition (polar residues). Ser409 carries the phosphoserine modification. A nervy homology region 3 (NHR3) region spans residues 435–484 (VEFWKKTEEAVNKVKIQAMSEVQKAVAEAEQKAFEVIATERARMEQTIAD). A Glycyl lysine isopeptide (Lys-Gly) (interchain with G-Cter in SUMO2) cross-link involves residue Lys449. Residues 451–491 (QAMSEVQKAVAEAEQKAFEVIATERARMEQTIADVKRQAAE) adopt a coiled-coil conformation. Residues Cys507, Cys510, Cys518, Cys521, Cys527, Cys531, His539, and Cys543 each coordinate Zn(2+). The segment at 507 to 543 (CWNCGRKASETCSGCNIARYCGSFCQHKDWERHHRLC) adopts an MYND-type zinc-finger fold. Residues 547–604 (LHGQSPHGQGRPLLPVGRGSSARSADCSVPSPALDKTSATTSRSSTPASVTAIDTNGL) are disordered. Residue Ser577 is modified to Phosphoserine. A compositionally biased stretch (low complexity) spans 583-598 (TSATTSRSSTPASVTA).

It belongs to the CBFA2T family. In terms of assembly, homooligomer. Homotetramerization is mediated by nervy homology region 2. Can interact with RUNX1T1/CBFA2T1 and CBFA2T3/MTG16; heterotetramerization between members of the CBFA2T family is proposed. Forms a heterooligomer with the AML1-MTG8/ETO fusion protein. Interacts with PRDM14. Interacts with RBPJ, GFI1, TCF4. Interacts with TAL1 and CBFA2T3/MTG16; the heteromer with CBFA2T3/MTG16 may function in repression of TAL1. In terms of tissue distribution, ubiquitously expressed in fetal and adult tissues. Highly expressed in adult brain, heart, lung, kidney, lymph node, appendix, thymus, testis, uterus, small intestine, prostate and thymus.

It localises to the nucleus. Its function is as follows. Transcriptional corepressor which facilitates transcriptional repression via its association with DNA-binding transcription factors and recruitment of other corepressors and histone-modifying enzymes. Via association with PRDM14 is involved in regulation of embryonic stem cell (ESC) pluripotency. Involved in primordial germ cell (PCG) formation. Stabilizes PRDM14 and OCT4 on chromatin in a homooligomerization-dependent manner. Can repress the expression of MMP7 in a ZBTB33-dependent manner. May function as a complex with the chimeric protein RUNX1/AML1-CBFA2T1/MTG8 (AML1-MTG8/ETO fusion protein) which is produced in acute myeloid leukemia with the chromosomal translocation t(8;21). May thus be involved in the repression of AML1-dependent transcription and the induction of G-CSF/CSF3-dependent cell growth. May be a tumor suppressor gene candidate involved in myeloid tumors with the deletion of the 20q11 region. Through heteromerization with CBFA2T3/MTG16 may be involved in regulation of the proliferation and the differentiation of erythroid progenitors by repressing the expression of TAL1 target genes. Required for the maintenance of the secretory cell lineage in the small intestine. Can inhibit Notch signaling probably by association with RBPJ and may be involved in GFI1-mediated Paneth cell differentiation. The chain is Protein CBFA2T2 (CBFA2T2) from Homo sapiens (Human).